We begin with the raw amino-acid sequence, 368 residues long: Alanine racemase (368 aa).

Residue lysine 34 is the Proton acceptor; specific for D-alanine of the active site. Lysine 34 is subject to N6-(pyridoxal phosphate)lysine. Arginine 132 contributes to the substrate binding site. Catalysis depends on tyrosine 261, which acts as the Proton acceptor; specific for L-alanine. Methionine 309 is a substrate binding site.

Belongs to the alanine racemase family. It depends on pyridoxal 5'-phosphate as a cofactor.

It catalyses the reaction L-alanine = D-alanine. It participates in amino-acid biosynthesis; D-alanine biosynthesis; D-alanine from L-alanine: step 1/1. Its function is as follows. Catalyzes the interconversion of L-alanine and D-alanine. May also act on other amino acids. This Carboxydothermus hydrogenoformans (strain ATCC BAA-161 / DSM 6008 / Z-2901) protein is Alanine racemase (alr).